The primary structure comprises 432 residues: Phosphomethylpyrimidine synthase (432 aa).

Residues asparagine 66, methionine 95, tyrosine 124, histidine 163, 185-187 (SRG), 226-229 (DGLR), and glutamate 265 each bind substrate. Residue histidine 269 participates in Zn(2+) binding. Tyrosine 292 provides a ligand contact to substrate. Histidine 333 serves as a coordination point for Zn(2+). The [4Fe-4S] cluster site is built by cysteine 409, cysteine 412, and cysteine 416.

Belongs to the ThiC family. It depends on [4Fe-4S] cluster as a cofactor.

It catalyses the reaction 5-amino-1-(5-phospho-beta-D-ribosyl)imidazole + S-adenosyl-L-methionine = 4-amino-2-methyl-5-(phosphooxymethyl)pyrimidine + CO + 5'-deoxyadenosine + formate + L-methionine + 3 H(+). It participates in cofactor biosynthesis; thiamine diphosphate biosynthesis. Catalyzes the synthesis of the hydroxymethylpyrimidine phosphate (HMP-P) moiety of thiamine from aminoimidazole ribotide (AIR) in a radical S-adenosyl-L-methionine (SAM)-dependent reaction. The protein is Phosphomethylpyrimidine synthase of Desulforamulus reducens (strain ATCC BAA-1160 / DSM 100696 / MI-1) (Desulfotomaculum reducens).